The following is a 214-amino-acid chain: Adenylate kinase (214 aa).

Position 10-15 (G10–T15) interacts with ATP. Positions S30–V59 are NMP. AMP is bound by residues T31, R36, Q57–V59, G85–R88, and Q92. Positions G122–D159 are LID. ATP is bound by residues R123 and V132–Y133. AMP contacts are provided by R156 and R167. Q200 lines the ATP pocket.

It belongs to the adenylate kinase family. In terms of assembly, monomer.

It is found in the cytoplasm. The enzyme catalyses AMP + ATP = 2 ADP. The protein operates within purine metabolism; AMP biosynthesis via salvage pathway; AMP from ADP: step 1/1. Catalyzes the reversible transfer of the terminal phosphate group between ATP and AMP. Plays an important role in cellular energy homeostasis and in adenine nucleotide metabolism. This is Adenylate kinase from Shewanella sp. (strain ANA-3).